A 235-amino-acid chain; its full sequence is Ribosome maturation factor RimM (235 aa).

The span at 1–19 (MKHEEANKEIGGRGAEGQR) shows a compositional bias: basic and acidic residues. The segment at 1 to 49 (MKHEEANKEIGGRGAEGQRSKRVGGNSKIQNIQSPAPNPQPIVPNTQSP) is disordered. Residues 150–230 (EDEYHVLDLI…RIEITPPPGL (81 aa)) enclose the PRC barrel domain.

The protein belongs to the RimM family. In terms of assembly, binds ribosomal protein uS19.

Its subcellular location is the cytoplasm. An accessory protein needed during the final step in the assembly of 30S ribosomal subunit, possibly for assembly of the head region. Essential for efficient processing of 16S rRNA. May be needed both before and after RbfA during the maturation of 16S rRNA. It has affinity for free ribosomal 30S subunits but not for 70S ribosomes. The chain is Ribosome maturation factor RimM from Nostoc punctiforme (strain ATCC 29133 / PCC 73102).